We begin with the raw amino-acid sequence, 305 residues long: MSKKLTFQEIILTLQQFWNDQGCMLMQAYDNEKGAGTMSPYTFLRAIGPEPWNAAYVEPSRRPADGRYGENPNRLYQHHQFQVVMKPSPSNIQELYLESLEKLGINPLEHDIRFVEDNWENPSTGSAGLGWEVWLDGMEITQFTYFQQVGGLATGPVTAEVTYGLERLASYIQEVDSVYDIEWADGVKYGEIFIQPEYEHSKYSFEISDQEILLENFDKFEKEAGRALEEGLVHPAYDYVLKCSHTFNLLDARGAVSVTERAGYIARIRNLARVVAKTFVAERKRLGYPLLDEETRVKLLAEDAE.

This sequence belongs to the class-II aminoacyl-tRNA synthetase family. Tetramer of two alpha and two beta subunits.

Its subcellular location is the cytoplasm. It carries out the reaction tRNA(Gly) + glycine + ATP = glycyl-tRNA(Gly) + AMP + diphosphate. The polypeptide is Glycine--tRNA ligase alpha subunit (Streptococcus pneumoniae (strain P1031)).